Consider the following 212-residue polypeptide: phospholipase A2 inhibitor and Ly6/PLAUR domain-containing protein (212 aa).

A signal peptide spans 1–24 (MILFRRHRTFLLAFTLLCTLLGLG). Residues 27–117 (LTCEVCKGSG…NSGSVPPPLN (91 aa)) form the UPAR/Ly6 domain. 7 disulfides stabilise this stretch: Cys-29–Cys-53, Cys-32–Cys-39, Cys-46–Cys-74, Cys-80–Cys-101, Cys-102–Cys-107, Cys-126–Cys-152, and Cys-145–Cys-173.

This sequence belongs to the CNF-like-inhibitor family.

It localises to the secreted. The protein is phospholipase A2 inhibitor and Ly6/PLAUR domain-containing protein (Pinlyp) of Mus musculus (Mouse).